Reading from the N-terminus, the 179-residue chain is Large ribosomal subunit protein uL5 (179 aa).

The protein belongs to the universal ribosomal protein uL5 family. Part of the 50S ribosomal subunit; part of the 5S rRNA/L5/L18/L25 subcomplex. Contacts the 5S rRNA and the P site tRNA. Forms a bridge to the 30S subunit in the 70S ribosome.

Functionally, this is one of the proteins that bind and probably mediate the attachment of the 5S RNA into the large ribosomal subunit, where it forms part of the central protuberance. In the 70S ribosome it contacts protein S13 of the 30S subunit (bridge B1b), connecting the 2 subunits; this bridge is implicated in subunit movement. Contacts the P site tRNA; the 5S rRNA and some of its associated proteins might help stabilize positioning of ribosome-bound tRNAs. The polypeptide is Large ribosomal subunit protein uL5 (Macrococcus caseolyticus (strain JCSC5402) (Macrococcoides caseolyticum)).